Consider the following 146-residue polypeptide: L-fucose mutarotase (146 aa).

Residue H22 is the Proton donor of the active site. Substrate contacts are provided by residues D30, R109, and 131 to 133; that span reads YGN.

The protein belongs to the RbsD / FucU family. FucU mutarotase subfamily. As to quaternary structure, homodecamer.

Its subcellular location is the cytoplasm. It catalyses the reaction alpha-L-fucose = beta-L-fucose. Its pathway is carbohydrate metabolism; L-fucose metabolism. Functionally, involved in the anomeric conversion of L-fucose. The sequence is that of L-fucose mutarotase from Glaesserella parasuis serovar 5 (strain SH0165) (Haemophilus parasuis).